The primary structure comprises 711 residues: Polyribonucleotide nucleotidyltransferase (711 aa).

Mg(2+) contacts are provided by Asp-490 and Asp-496. The 60-residue stretch at 556–615 (PRIETMQVPTDKIREVIGSGGKVIREIVEVSGAKVDINDDGVIKIASANGEAIQKAYDMI) folds into the KH domain. One can recognise an S1 motif domain in the interval 625-693 (GAVYTGKVVK…DRGKVRLSMK (69 aa)).

This sequence belongs to the polyribonucleotide nucleotidyltransferase family. The cofactor is Mg(2+).

The protein localises to the cytoplasm. It carries out the reaction RNA(n+1) + phosphate = RNA(n) + a ribonucleoside 5'-diphosphate. Involved in mRNA degradation. Catalyzes the phosphorolysis of single-stranded polyribonucleotides processively in the 3'- to 5'-direction. The chain is Polyribonucleotide nucleotidyltransferase from Ruegeria sp. (strain TM1040) (Silicibacter sp.).